The chain runs to 207 residues: 2,3-bisphosphoglycerate-dependent phosphoglycerate mutase (207 aa).

Substrate contacts are provided by residues 10-17 (RHGQSEWN), 23-24 (TG), R62, 89-92 (ERDY), K100, 116-117 (RR), and 160-161 (GN). The active-site Tele-phosphohistidine intermediate is the H11. The active-site Proton donor/acceptor is E89.

The protein belongs to the phosphoglycerate mutase family. BPG-dependent PGAM subfamily. Homodimer.

It carries out the reaction (2R)-2-phosphoglycerate = (2R)-3-phosphoglycerate. Its pathway is carbohydrate degradation; glycolysis; pyruvate from D-glyceraldehyde 3-phosphate: step 3/5. Functionally, catalyzes the interconversion of 2-phosphoglycerate and 3-phosphoglycerate. This Bradyrhizobium sp. (strain ORS 278) protein is 2,3-bisphosphoglycerate-dependent phosphoglycerate mutase.